A 556-amino-acid chain; its full sequence is Solute carrier family 22 member 20 (556 aa).

The Cytoplasmic segment spans residues 1-15; it reads MAFTDLLDALGGVGR. Residues 16 to 36 form a helical membrane-spanning segment; sequence FQLVYTALLLLPCGLLACHTF. The Extracellular portion of the chain corresponds to 37–137; the sequence is LQNFTAAAPP…LVCEARTLRD (101 aa). 4 N-linked (GlcNAc...) asparagine glycosylation sites follow: N39, N54, N61, and N96. Residues 138–158 form a helical membrane-spanning segment; that stretch reads LAQSIYMSGVLVGAALFGGLA. The Cytoplasmic segment spans residues 159-166; that stretch reads DRLGRKAP. A helical membrane pass occupies residues 167–187; it reads LVWSYLQLAVSGAATAYVGSF. At 188 to 194 the chain is on the extracellular side; it reads SAYCVFR. Residues 195-215 traverse the membrane as a helical segment; sequence FLMGMTFSGIILNSLSLVVEW. Over 216 to 225 the chain is Cytoplasmic; the sequence is MPTRGRTVAG. The chain crosses the membrane as a helical span at residues 226–246; the sequence is ILLGFSFTLGQLILAGVAYLI. At 247–250 the chain is on the extracellular side; sequence RPWR. The helical transmembrane segment at 251–271 threads the bilayer; that stretch reads WLQFAVSAPFLVFFLYSWWLP. The Cytoplasmic portion of the chain corresponds to 272 to 339; the sequence is ESSRWLLLHG…DLFRTPAIRR (68 aa). The chain crosses the membrane as a helical span at residues 340–360; the sequence is VTCCLMGVWFSNSVAYYGLAM. The Extracellular portion of the chain corresponds to 361-366; sequence DLQKFG. A helical membrane pass occupies residues 367–387; sequence LSIYLVQALFGIIDIPAMLVA. Over 388 to 397 the chain is Cytoplasmic; the sequence is TTTMIYVGRR. The chain crosses the membrane as a helical span at residues 398 to 418; it reads ATVSSFLILAGLMVIANMFMP. Residues 419–425 are Extracellular-facing; it reads EDLQTLR. Residues 426–446 traverse the membrane as a helical segment; that stretch reads TVQAALGKGCLASSFICVYLF. The Cytoplasmic portion of the chain corresponds to 447-457; sequence TGELYPTEIRQ. Residues 458–478 form a helical membrane-spanning segment; the sequence is MGMGFASVNARLGGLVAPLIT. The Extracellular segment spans residues 479-485; sequence TLGEISP. A helical transmembrane segment spans residues 486–506; it reads VLPPVSFGATSVLAGMAVACF. Over 507 to 556 the chain is Cytoplasmic; the sequence is LTETRNVPLVETIAAMERRVKQGRSKRDTEQKSEEISLQQLGASPLKETI. The span at 526–541 shows a compositional bias: basic and acidic residues; that stretch reads VKQGRSKRDTEQKSEE. The tract at residues 526–556 is disordered; sequence VKQGRSKRDTEQKSEEISLQQLGASPLKETI.

Belongs to the major facilitator (TC 2.A.1) superfamily. Organic cation transporter (TC 2.A.1.19) family. Highly expressed in olfactory mucosa. Weakly expressed in testis. Not detected in heart, spleen, lung, kidney or brain.

The protein localises to the membrane. In terms of biological role, organic anion transporter that mediates the uptake of estrone sulfate. Inhibited by probenecid, propionate, 2-methylbutyrate, 3-methylbutyrate, benzoate, heptanoate and 2-ethylhaxanoate. May act as an odorant transporter. In Mus musculus (Mouse), this protein is Solute carrier family 22 member 20 (Slc22a20).